A 528-amino-acid chain; its full sequence is D-3-phosphoglycerate dehydrogenase (528 aa).

Residues Arg151 to Ile152, Asp171, Ala230 to Arg232, and Asp256 each bind NAD(+). Residue Arg232 is part of the active site. Glu261 is a catalytic residue. Residue His279 is the Proton donor of the active site. His279–Ala282 serves as a coordination point for NAD(+). Residues Asn455–Leu527 enclose the ACT domain.

The protein belongs to the D-isomer specific 2-hydroxyacid dehydrogenase family.

It catalyses the reaction (2R)-3-phosphoglycerate + NAD(+) = 3-phosphooxypyruvate + NADH + H(+). The enzyme catalyses (R)-2-hydroxyglutarate + NAD(+) = 2-oxoglutarate + NADH + H(+). It functions in the pathway amino-acid biosynthesis; L-serine biosynthesis; L-serine from 3-phospho-D-glycerate: step 1/3. Catalyzes the reversible oxidation of 3-phospho-D-glycerate to 3-phosphonooxypyruvate, the first step of the phosphorylated L-serine biosynthesis pathway. Also catalyzes the reversible oxidation of 2-hydroxyglutarate to 2-oxoglutarate. This chain is D-3-phosphoglycerate dehydrogenase (serA), found in Mycobacterium bovis (strain ATCC BAA-935 / AF2122/97).